Here is a 188-residue protein sequence, read N- to C-terminus: GMP synthase [glutamine-hydrolyzing] subunit A (188 aa).

The 187-residue stretch at 2 to 188 folds into the Glutamine amidotransferase type-1 domain; that stretch reads KIAVIYFGGQ…FKNFIEACKK (187 aa). Cys79 serves as the catalytic Nucleophile. Catalysis depends on residues His166 and Glu168.

As to quaternary structure, heterodimer composed of a glutamine amidotransferase subunit (A) and a GMP-binding subunit (B).

The catalysed reaction is XMP + L-glutamine + ATP + H2O = GMP + L-glutamate + AMP + diphosphate + 2 H(+). It functions in the pathway purine metabolism; GMP biosynthesis; GMP from XMP (L-Gln route): step 1/1. In terms of biological role, catalyzes the synthesis of GMP from XMP. The chain is GMP synthase [glutamine-hydrolyzing] subunit A from Sulfurisphaera tokodaii (strain DSM 16993 / JCM 10545 / NBRC 100140 / 7) (Sulfolobus tokodaii).